A 259-amino-acid polypeptide reads, in one-letter code: Tonin (259 aa).

A signal peptide spans 1–18 (MWLQILSLVLSVGRIDAA). Positions 19 to 24 (PPGQSR) are cleaved as a propeptide — activation peptide. One can recognise a Peptidase S1 domain in the interval 25–256 (IVGGYKCEKN…FTSWIKKVMK (232 aa)). 5 cysteine pairs are disulfide-bonded: Cys-31–Cys-171, Cys-48–Cys-64, Cys-150–Cys-217, Cys-182–Cys-196, and Cys-207–Cys-232. His-63 serves as the catalytic Charge relay system. A Zn(2+)-binding site is contributed by His-63. N-linked (GlcNAc...) asparagine glycosylation occurs at Asn-106. His-113 and His-115 together coordinate Zn(2+). Residue Asp-118 is the Charge relay system of the active site. An N-linked (GlcNAc...) asparagine glycan is attached at Asn-189. Catalysis depends on Ser-211, which acts as the Charge relay system.

Belongs to the peptidase S1 family. Kallikrein subfamily. Monomer. Zn(2+) is required as a cofactor. Found in submaxillary gland.

The catalysed reaction is Preferential cleavage of Arg-|-Xaa bonds in small molecule substrates. Highly selective action to release kallidin (lysyl-bradykinin) from kininogen involves hydrolysis of Met-|-Xaa or Leu-|-Xaa.. In terms of biological role, this protein has both trypsin- and chymotrypsin-like activities, being able to release angiotensin II from angiotensin I or angiotensinogen. The chain is Tonin (Klk2) from Rattus norvegicus (Rat).